The chain runs to 256 residues: Flap endonuclease Xni (256 aa).

Asp105 contacts Mg(2+). One can recognise a 5'-3' exonuclease domain in the interval 163-256 (RSQLIDYLAL…QFRIKKPDSE (94 aa)). Leu172, Ala173, Pro181, Val183, and Ile186 together coordinate K(+). Positions 185–190 (GIGPKS) are interaction with DNA.

This sequence belongs to the Xni family. Mg(2+) is required as a cofactor. The cofactor is K(+).

In terms of biological role, has flap endonuclease activity. During DNA replication, flap endonucleases cleave the 5'-overhanging flap structure that is generated by displacement synthesis when DNA polymerase encounters the 5'-end of a downstream Okazaki fragment. In Shewanella pealeana (strain ATCC 700345 / ANG-SQ1), this protein is Flap endonuclease Xni.